A 263-amino-acid polypeptide reads, in one-letter code: Shikimate dehydrogenase (NADP(+)) (263 aa).

Shikimate contacts are provided by residues 16 to 18 (SKS) and T65. The active-site Proton acceptor is the K69. Positions 90 and 105 each coordinate shikimate. NADP(+)-binding positions include 125–129 (GSGGS) and L208. Y210 contributes to the shikimate binding site. Position 230 (G230) interacts with NADP(+).

Belongs to the shikimate dehydrogenase family. In terms of assembly, homodimer.

It catalyses the reaction shikimate + NADP(+) = 3-dehydroshikimate + NADPH + H(+). The protein operates within metabolic intermediate biosynthesis; chorismate biosynthesis; chorismate from D-erythrose 4-phosphate and phosphoenolpyruvate: step 4/7. Involved in the biosynthesis of the chorismate, which leads to the biosynthesis of aromatic amino acids. Catalyzes the reversible NADPH linked reduction of 3-dehydroshikimate (DHSA) to yield shikimate (SA). The chain is Shikimate dehydrogenase (NADP(+)) from Helicobacter pylori (strain G27).